Consider the following 220-residue polypeptide: MAKNRFNQSWLHDHINDPYVKMAQREGYRARAAYKLKEIDEQDKLIRPGQVIVDLGAAPGSWSQYARNKLAQGKRRDAVREGGIDGTIIALDMLPMEPVADVHFIQGDFREESVLHQLEEVLAGRAVDLVISDMAPNLSGVAVADAARIEHVCDLALEFAQNHLKPDGALLVKCFHGSGYSQIVEKFKHQFKTVAPRKPKASRDKSSETFILGRHLKQPR.

S-adenosyl-L-methionine is bound by residues Gly60, Trp62, Asp92, Asp108, and Asp133. Catalysis depends on Lys173, which acts as the Proton acceptor. The segment at 195-220 is disordered; that stretch reads APRKPKASRDKSSETFILGRHLKQPR.

Belongs to the class I-like SAM-binding methyltransferase superfamily. RNA methyltransferase RlmE family.

It is found in the cytoplasm. The enzyme catalyses uridine(2552) in 23S rRNA + S-adenosyl-L-methionine = 2'-O-methyluridine(2552) in 23S rRNA + S-adenosyl-L-homocysteine + H(+). In terms of biological role, specifically methylates the uridine in position 2552 of 23S rRNA at the 2'-O position of the ribose in the fully assembled 50S ribosomal subunit. The polypeptide is Ribosomal RNA large subunit methyltransferase E (Burkholderia pseudomallei (strain 1710b)).